We begin with the raw amino-acid sequence, 817 residues long: Protein-glutamine gamma-glutamyltransferase K (817 aa).

Disordered regions lie at residues 1–38 (MMDG…SRRG) and 59–105 (DDWG…DGTI). The segment at 1 to 100 (MMDGPRSDVG…VSRGSGVNAA (100 aa)) is membrane anchorage region. A compositionally biased stretch (pro residues) spans 17 to 26 (LQPPTTPSPE). Position 22 is a phosphothreonine (Thr22). Residues Ser24, Ser68, Ser82, Ser85, Ser92, and Ser95 each carry the phosphoserine modification. Positions 71 to 84 (RGSSSGTRRPGSRG) are enriched in low complexity. Residues Cys377, His436, and Asp459 contribute to the active site. 4 residues coordinate Ca(2+): Asn499, Asp501, Glu548, and Glu553. The interval 793-817 (GGFFSDAGGDSHLGETIPMASRGGA) is disordered.

The protein belongs to the transglutaminase superfamily. Transglutaminase family. In terms of assembly, interacts with PLAAT4. Ca(2+) serves as cofactor. Palmitoylated. In terms of processing, the membrane anchorage region possesses a cluster of five cysteines within which fatty acid(s) may become thioester-linked. It is subject to phorbol ester-stimulated phosphorylation and is hypersensitive to proteolysis, which releases the enzyme in a soluble form. Post-translationally, tyrosine-phosphorylated.

The protein resides in the membrane. The catalysed reaction is L-glutaminyl-[protein] + L-lysyl-[protein] = [protein]-L-lysyl-N(6)-5-L-glutamyl-[protein] + NH4(+). Its function is as follows. Catalyzes the cross-linking of proteins and the conjugation of polyamines to proteins. Responsible for cross-linking epidermal proteins during formation of the stratum corneum. Involved in cell proliferation. This chain is Protein-glutamine gamma-glutamyltransferase K (TGM1), found in Homo sapiens (Human).